The sequence spans 149 residues: Urease accessory protein UreE (149 aa).

The protein belongs to the UreE family.

The protein localises to the cytoplasm. Involved in urease metallocenter assembly. Binds nickel. Probably functions as a nickel donor during metallocenter assembly. In Corynebacterium efficiens (strain DSM 44549 / YS-314 / AJ 12310 / JCM 11189 / NBRC 100395), this protein is Urease accessory protein UreE.